A 307-amino-acid chain; its full sequence is Serine/threonine-protein phosphatase 4 catalytic subunit (307 aa).

Mn(2+) is bound by residues Asp54, His56, Asp82, and Asn114. His115 acts as the Proton donor in catalysis. His164 and His238 together coordinate Mn(2+). Leu307 is modified (leucine methyl ester).

This sequence belongs to the PPP phosphatase family. PP-4 (PP-X) subfamily. As to quaternary structure, serine/threonine-protein phosphatase 4 (PP4) occurs in different assemblies of the catalytic and one or more regulatory subunits. The cofactor is Mn(2+).

The protein resides in the cytoplasm. It is found in the nucleus. It localises to the cytoskeleton. Its subcellular location is the microtubule organizing center. The protein localises to the centrosome. It carries out the reaction O-phospho-L-seryl-[protein] + H2O = L-seryl-[protein] + phosphate. The enzyme catalyses O-phospho-L-threonyl-[protein] + H2O = L-threonyl-[protein] + phosphate. Functionally, protein phosphatase that regulates many processes such as microtubule organization at centrosomes. This chain is Serine/threonine-protein phosphatase 4 catalytic subunit (ppp4c), found in Xenopus laevis (African clawed frog).